The chain runs to 281 residues: uncharacterized protein (281 aa).

Residues 5-27 (AYVTVIYGNNIYLTGALVLGYTL) form a helical membrane-spanning segment.

It localises to the membrane. This is an uncharacterized protein from Acanthamoeba polyphaga mimivirus (APMV).